The sequence spans 352 residues: Ketoisovalerate oxidoreductase subunit VorB (352 aa).

Heterotrimer of the VorA, VorB and VorC subunits.

It catalyses the reaction 3-methyl-2-oxobutanoate + 2 oxidized [2Fe-2S]-[ferredoxin] + CoA = 2-methylpropanoyl-CoA + 2 reduced [2Fe-2S]-[ferredoxin] + CO2 + H(+). This chain is Ketoisovalerate oxidoreductase subunit VorB (vorB), found in Methanothermobacter thermautotrophicus (strain ATCC 29096 / DSM 1053 / JCM 10044 / NBRC 100330 / Delta H) (Methanobacterium thermoautotrophicum).